A 672-amino-acid polypeptide reads, in one-letter code: UvrABC system protein B (672 aa).

Positions 26–181 (AGLEDGLAYQ…ILQRLAELQY (156 aa)) constitute a Helicase ATP-binding domain. 39 to 46 (GVTGSGKT) provides a ligand contact to ATP. The Beta-hairpin motif lies at 92–115 (YYDYYQPEAYVPSSDTYIEKDASI). A Helicase C-terminal domain is found at 430–592 (QVDDLLSEIK…ITPKSIQKAV (163 aa)). The UVR domain maps to 631–666 (AKELRKLEEQMYHHARNLEFEEAAAVRDKIQHIRKG).

Belongs to the UvrB family. Forms a heterotetramer with UvrA during the search for lesions. Interacts with UvrC in an incision complex.

It localises to the cytoplasm. In terms of biological role, the UvrABC repair system catalyzes the recognition and processing of DNA lesions. A damage recognition complex composed of 2 UvrA and 2 UvrB subunits scans DNA for abnormalities. Upon binding of the UvrA(2)B(2) complex to a putative damaged site, the DNA wraps around one UvrB monomer. DNA wrap is dependent on ATP binding by UvrB and probably causes local melting of the DNA helix, facilitating insertion of UvrB beta-hairpin between the DNA strands. Then UvrB probes one DNA strand for the presence of a lesion. If a lesion is found the UvrA subunits dissociate and the UvrB-DNA preincision complex is formed. This complex is subsequently bound by UvrC and the second UvrB is released. If no lesion is found, the DNA wraps around the other UvrB subunit that will check the other stand for damage. This chain is UvrABC system protein B, found in Coxiella burnetii (strain CbuG_Q212) (Coxiella burnetii (strain Q212)).